The chain runs to 291 residues: Proteasome subunit beta (291 aa).

A propeptide spans 1-56 (MTRSFPDRLPTNLAFPGISVINQSSFVDLLRRQAPELLPVSLGGGQSGGGQQLSHG) (removed in mature form; by autocatalysis). Threonine 57 (nucleophile) is an active-site residue.

The protein belongs to the peptidase T1B family. In terms of assembly, the 20S proteasome core is composed of 14 alpha and 14 beta subunits that assemble into four stacked heptameric rings, resulting in a barrel-shaped structure. The two inner rings, each composed of seven catalytic beta subunits, are sandwiched by two outer rings, each composed of seven alpha subunits. The catalytic chamber with the active sites is on the inside of the barrel. Has a gated structure, the ends of the cylinder being occluded by the N-termini of the alpha-subunits. Is capped by the proteasome-associated ATPase, ARC.

Its subcellular location is the cytoplasm. The catalysed reaction is Cleavage of peptide bonds with very broad specificity.. It functions in the pathway protein degradation; proteasomal Pup-dependent pathway. With respect to regulation, the formation of the proteasomal ATPase ARC-20S proteasome complex, likely via the docking of the C-termini of ARC into the intersubunit pockets in the alpha-rings, may trigger opening of the gate for substrate entry. Interconversion between the open-gate and close-gate conformations leads to a dynamic regulation of the 20S proteasome proteolysis activity. Its function is as follows. Component of the proteasome core, a large protease complex with broad specificity involved in protein degradation. The protein is Proteasome subunit beta of Mycobacterium leprae (strain Br4923).